The following is a 520-amino-acid chain: BTB/POZ domain-containing protein At3g50780 (520 aa).

The segment at 43–68 (SHNSLTKHKQSSPALQPPKPEKKPSS) is disordered. In terms of domain architecture, BTB spans 127 to 196 (AKVILVGKQG…MYCKDMKQRL (70 aa)).

It functions in the pathway protein modification; protein ubiquitination. May act as a substrate-specific adapter of an E3 ubiquitin-protein ligase complex (CUL3-RBX1-BTB) which mediates the ubiquitination and subsequent proteasomal degradation of target proteins. This is BTB/POZ domain-containing protein At3g50780 from Arabidopsis thaliana (Mouse-ear cress).